A 269-amino-acid polypeptide reads, in one-letter code: uncharacterized protein (269 aa).

It to T.pallidum TP0678.

This is an uncharacterized protein from Borreliella burgdorferi (strain ATCC 35210 / DSM 4680 / CIP 102532 / B31) (Borrelia burgdorferi).